The primary structure comprises 331 residues: Phosphate acyltransferase (331 aa).

The protein belongs to the PlsX family. In terms of assembly, homodimer. Probably interacts with PlsY.

The protein resides in the cytoplasm. It catalyses the reaction a fatty acyl-[ACP] + phosphate = an acyl phosphate + holo-[ACP]. The protein operates within lipid metabolism; phospholipid metabolism. Functionally, catalyzes the reversible formation of acyl-phosphate (acyl-PO(4)) from acyl-[acyl-carrier-protein] (acyl-ACP). This enzyme utilizes acyl-ACP as fatty acyl donor, but not acyl-CoA. The sequence is that of Phosphate acyltransferase from Clostridium acetobutylicum (strain ATCC 824 / DSM 792 / JCM 1419 / IAM 19013 / LMG 5710 / NBRC 13948 / NRRL B-527 / VKM B-1787 / 2291 / W).